Here is a 335-residue protein sequence, read N- to C-terminus: uncharacterized protein (335 aa).

28–35 (GPINSGKT) provides a ligand contact to ATP.

This sequence belongs to the archaeal ATPase family.

This is an uncharacterized protein from Pyrococcus abyssi (strain GE5 / Orsay).